Here is a 317-residue protein sequence, read N- to C-terminus: Acetyl-coenzyme A carboxylase carboxyl transferase subunit alpha (317 aa).

Residues 37 to 292 enclose the CoA carboxyltransferase C-terminal domain; sequence EINKKLEQTK…ADYITKGYNE (256 aa).

The protein belongs to the AccA family. As to quaternary structure, acetyl-CoA carboxylase is a heterohexamer composed of biotin carboxyl carrier protein (AccB), biotin carboxylase (AccC) and two subunits each of ACCase subunit alpha (AccA) and ACCase subunit beta (AccD).

The protein localises to the cytoplasm. The enzyme catalyses N(6)-carboxybiotinyl-L-lysyl-[protein] + acetyl-CoA = N(6)-biotinyl-L-lysyl-[protein] + malonyl-CoA. It participates in lipid metabolism; malonyl-CoA biosynthesis; malonyl-CoA from acetyl-CoA: step 1/1. Component of the acetyl coenzyme A carboxylase (ACC) complex. First, biotin carboxylase catalyzes the carboxylation of biotin on its carrier protein (BCCP) and then the CO(2) group is transferred by the carboxyltransferase to acetyl-CoA to form malonyl-CoA. The chain is Acetyl-coenzyme A carboxylase carboxyl transferase subunit alpha from Flavobacterium johnsoniae (strain ATCC 17061 / DSM 2064 / JCM 8514 / BCRC 14874 / CCUG 350202 / NBRC 14942 / NCIMB 11054 / UW101) (Cytophaga johnsonae).